The sequence spans 553 residues: HTH-type transcriptional regulator SgrR (553 aa).

Residues 1-113 (MSTSRLQQQF…RQMLLSQLGR (113 aa)) enclose the HTH marR-type domain. The H-T-H motif DNA-binding region spans 26 to 49 (LQALAEVLNCSRRHVRSLLGKMQH). Residues 163 to 494 (ELEPDLSHHW…EELHQDIESW (332 aa)) are solute-binding.

Activates the small RNA gene sgrS under glucose-phosphate stress conditions as well as yfdZ. Represses its own transcription under both stress and non-stress conditions. Might act as a sensor of the intracellular accumulation of phosphoglucose by binding these molecules in its C-terminal solute-binding domain. The polypeptide is HTH-type transcriptional regulator SgrR (Yersinia pestis bv. Antiqua (strain Antiqua)).